Reading from the N-terminus, the 244-residue chain is Probable proteasome subunit alpha type-1 (244 aa).

This sequence belongs to the peptidase T1A family. In terms of assembly, the 26S proteasome consists of a 20S proteasome core and two 19S regulatory subunits. The 20S proteasome core is composed of 28 subunits that are arranged in four stacked rings, resulting in a barrel-shaped structure. The two end rings are each formed by seven alpha subunits, and the two central rings are each formed by seven beta subunits. The catalytic chamber with the active sites is on the inside of the barrel.

It localises to the cytoplasm. The protein resides in the nucleus. Functionally, the proteasome is a multicatalytic proteinase complex which is characterized by its ability to cleave peptides with Arg, Phe, Tyr, Leu, and Glu adjacent to the leaving group at neutral or slightly basic pH. The proteasome has an ATP-dependent proteolytic activity. This chain is Probable proteasome subunit alpha type-1, found in Schizosaccharomyces pombe (strain 972 / ATCC 24843) (Fission yeast).